The primary structure comprises 262 residues: Type III pantothenate kinase (262 aa).

9–16 (DAGNSRIK) is an ATP binding site. Substrate-binding positions include tyrosine 96 and 103 to 106 (GSDR). Residue aspartate 105 is the Proton acceptor of the active site. Threonine 129 provides a ligand contact to ATP. Residue threonine 189 participates in substrate binding.

The protein belongs to the type III pantothenate kinase family. In terms of assembly, homodimer. The cofactor is NH4(+). K(+) is required as a cofactor.

The protein localises to the cytoplasm. It carries out the reaction (R)-pantothenate + ATP = (R)-4'-phosphopantothenate + ADP + H(+). It functions in the pathway cofactor biosynthesis; coenzyme A biosynthesis; CoA from (R)-pantothenate: step 1/5. In terms of biological role, catalyzes the phosphorylation of pantothenate (Pan), the first step in CoA biosynthesis. The protein is Type III pantothenate kinase of Burkholderia ambifaria (strain MC40-6).